The primary structure comprises 360 residues: Putative agmatine deiminase (360 aa).

C353 acts as the Amidino-cysteine intermediate in catalysis.

Belongs to the agmatine deiminase family.

The catalysed reaction is agmatine + H2O = N-carbamoylputrescine + NH4(+). This chain is Putative agmatine deiminase, found in Vibrio parahaemolyticus serotype O3:K6 (strain RIMD 2210633).